Consider the following 276-residue polypeptide: Formamidopyrimidine-DNA glycosylase (276 aa).

The active-site Schiff-base intermediate with DNA is the Pro2. Glu3 serves as the catalytic Proton donor. The active-site Proton donor; for beta-elimination activity is the Lys60. Positions 93 and 112 each coordinate DNA. The FPG-type zinc-finger motif lies at 240–274 (NVYGKKGEPCVTCGTILEKTVVGGRGTHYCPICQP). The active-site Proton donor; for delta-elimination activity is Arg264.

The protein belongs to the FPG family. Monomer. Requires Zn(2+) as cofactor.

It carries out the reaction Hydrolysis of DNA containing ring-opened 7-methylguanine residues, releasing 2,6-diamino-4-hydroxy-5-(N-methyl)formamidopyrimidine.. The catalysed reaction is 2'-deoxyribonucleotide-(2'-deoxyribose 5'-phosphate)-2'-deoxyribonucleotide-DNA = a 3'-end 2'-deoxyribonucleotide-(2,3-dehydro-2,3-deoxyribose 5'-phosphate)-DNA + a 5'-end 5'-phospho-2'-deoxyribonucleoside-DNA + H(+). Involved in base excision repair of DNA damaged by oxidation or by mutagenic agents. Acts as a DNA glycosylase that recognizes and removes damaged bases. Has a preference for oxidized purines, such as 7,8-dihydro-8-oxoguanine (8-oxoG). Has AP (apurinic/apyrimidinic) lyase activity and introduces nicks in the DNA strand. Cleaves the DNA backbone by beta-delta elimination to generate a single-strand break at the site of the removed base with both 3'- and 5'-phosphates. The chain is Formamidopyrimidine-DNA glycosylase from Bacillus anthracis.